We begin with the raw amino-acid sequence, 477 residues long: Exodeoxyribonuclease 7 large subunit (477 aa).

The tract at residues 456–477 (GGTVAPRKAPPKKPGGGQGSLL) is disordered.

Belongs to the XseA family. In terms of assembly, heterooligomer composed of large and small subunits.

The protein resides in the cytoplasm. It catalyses the reaction Exonucleolytic cleavage in either 5'- to 3'- or 3'- to 5'-direction to yield nucleoside 5'-phosphates.. In terms of biological role, bidirectionally degrades single-stranded DNA into large acid-insoluble oligonucleotides, which are then degraded further into small acid-soluble oligonucleotides. This Parvibaculum lavamentivorans (strain DS-1 / DSM 13023 / NCIMB 13966) protein is Exodeoxyribonuclease 7 large subunit.